A 144-amino-acid polypeptide reads, in one-letter code: Protein archease (144 aa).

The Ca(2+) site is built by Asp14, Asp143, and Ile144.

This sequence belongs to the archease family.

Its function is as follows. Activates the tRNA-splicing ligase complex by facilitating the enzymatic turnover of catalytic subunit RtcB. Acts by promoting the guanylylation of RtcB, a key intermediate step in tRNA ligation. Can also alter the NTP specificity of RtcB such that ATP, dGTP or ITP is used efficiently. The polypeptide is Protein archease (Aeropyrum pernix (strain ATCC 700893 / DSM 11879 / JCM 9820 / NBRC 100138 / K1)).